The primary structure comprises 203 residues: Urease accessory protein UreG (203 aa).

Position 12–19 (12–19 (GPVGSGKT)) interacts with GTP.

Belongs to the SIMIBI class G3E GTPase family. UreG subfamily. In terms of assembly, homodimer. UreD, UreF and UreG form a complex that acts as a GTP-hydrolysis-dependent molecular chaperone, activating the urease apoprotein by helping to assemble the nickel containing metallocenter of UreC. The UreE protein probably delivers the nickel.

The protein resides in the cytoplasm. Its function is as follows. Facilitates the functional incorporation of the urease nickel metallocenter. This process requires GTP hydrolysis, probably effectuated by UreG. The chain is Urease accessory protein UreG from Alteromonas mediterranea (strain DSM 17117 / CIP 110805 / LMG 28347 / Deep ecotype).